An 839-amino-acid chain; its full sequence is Amyloid-beta A4 precursor protein-binding family A member 1 (839 aa).

Disordered stretches follow at residues 1-118 (MNHL…DESA), 235-346 (RLHH…EKRD), and 362-437 (VKTR…ESRK). Positions 23 to 38 (ESVEADLEHPEVEEEQ) are enriched in acidic residues. A Phosphoserine modification is found at S79. Basic and acidic residues-rich tracts occupy residues 103-112 (DGYEAERAQD) and 237-255 (HHYDERSDGESDSPEKEAE). The tract at residues 227–315 (YRQEALGARL…TPGGGHPDSP (89 aa)) is munc-18-1 binding. A phosphoserine mark is found at S243, S247, S249, S264, S281, and S286. T306 bears the Phosphothreonine mark. 2 positions are modified to phosphoserine: S314 and S369. At T372 the chain carries Phosphothreonine. An LIN-2/CASK binding region spans residues 375–438 (EPKEPIWVMR…ASTNKESRKS (64 aa)). Over residues 389 to 400 (PTRDCDDQRPVD) the composition is skewed to basic and acidic residues. The span at 401 to 417 (GDSPSPGSSSPLGAESS) shows a compositional bias: low complexity. 4 positions are modified to phosphoserine: S403, S405, S410, and S570. The 187-residue stretch at 459 to 645 (DGIIFAANYL…LLNTQDMYND (187 aa)) folds into the PID domain. Residues 628–643 (LSQKEYSDLLNTQDMY) are autoinhibitory helix linker. PDZ domains follow at residues 658 to 744 (DVFI…IVRC) and 749 to 824 (TVLI…TMPA).

Part of a multimeric complex containing STXBP1 and STX1A. Interacts with STXBP1. Component of the brain-specific heterotrimeric complex (LIN-10-LIN-2-LIN-7 complex) composed of at least APBA1, CASK, and LIN7, which associates with the motor protein KIF17 to transport vesicles along microtubules. Within the complex, interacts (via PDZ domain) with the motor protein KIF17; the interaction is direct and is required for association of KIF17 with the cargo that is to be transported. Binds to the cytoplasmic domain of amyloid protein (APP). Interacts (via PDZ 1 and 2 domains) with FSPB. Isoform 2 interacts (via its truncated PID domain) with active, GTP-bound RAB6A and RAB6B. In terms of tissue distribution, brain. Detected in the cerebellum, hippocampus, olfactory system, piriform and entorhinal cortex, supraoptic nucleus of the hypothalamus, substantia nigra, and other mesencephalic areas.

Its subcellular location is the cytoplasm. The protein localises to the perinuclear region. The protein resides in the nucleus. It localises to the golgi apparatus. Its function is as follows. Putative function in synaptic vesicle exocytosis by binding to Munc18-1, an essential component of the synaptic vesicle exocytotic machinery. May modulate processing of the amyloid-beta precursor protein (APP) and hence formation of APP-beta. In Rattus norvegicus (Rat), this protein is Amyloid-beta A4 precursor protein-binding family A member 1 (Apba1).